We begin with the raw amino-acid sequence, 332 residues long: MPIHNLNHVNMFLQVIASGSISSAARILRKSHTAVSSAVSNLEIDLCVELVRRDGYKVEPTEQALRLIPYMRSLLNYQQLIGDIAFNLNKGPRNLRVLLDTAIPPSFCDTVSSVLLDDFNMVSLIRTSPADSLATIKQDNAEIDIAITIDEELKISRFNQCVLGYTKAFVVAHPQHPLCNASLHSIASLANYRQISLGSRSGQHSNLLRPVSDKVLFVENFDDMLRLVEAGVGWGIAPHYFVEERLRNGTLAVLSELYEPGGIDTKVYCYYNTALESERSFLRFLESARQRLRELGRQRFDDAPAWQPSIVETAQRRSGPKALAYRQRAAPE.

Positions 4–61 (HNLNHVNMFLQVIASGSISSAARILRKSHTAVSSAVSNLEIDLCVELVRRDGYKVEPT) constitute an HTH lysR-type domain. The segment at residues 21 to 40 (ISSAARILRKSHTAVSSAVS) is a DNA-binding region (H-T-H motif).

This sequence belongs to the LysR transcriptional regulatory family. As to quaternary structure, forms homooligomers.

The protein resides in the cell inner membrane. It localises to the secreted. With respect to regulation, both 3,4-dihydroxy-2-heptylquinoline (PQS) and its precursor 4-hydroxy-2-heptylquinoline (HHQ) function as ligands and promote MvfR DNA-binding activity leading to transcriptional activation. In terms of biological role, transcription regulator that plays a critical role in virulence by positively regulating the expression of multiple quorum sensing (QS)-regulated virulence factors, genes involved in protein secretion, translation, response to oxidative stress and the phnAB operon. At the stationary phase, negatively autoregulates its function through cleavage and translocation to the extracellular space. The protein is Multiple virulence factor regulator MvfR of Pseudomonas aeruginosa (strain ATCC 15692 / DSM 22644 / CIP 104116 / JCM 14847 / LMG 12228 / 1C / PRS 101 / PAO1).